A 187-amino-acid chain; its full sequence is Large ribosomal subunit protein uL22 (187 aa).

The protein belongs to the universal ribosomal protein uL22 family.

This is Large ribosomal subunit protein uL22 (RPL17) from Theileria annulata.